Reading from the N-terminus, the 238-residue chain is Large ribosomal subunit protein uL3 (238 aa).

This sequence belongs to the universal ribosomal protein uL3 family. As to quaternary structure, part of the 50S ribosomal subunit. Forms a cluster with proteins L14 and L19.

Functionally, one of the primary rRNA binding proteins, it binds directly near the 3'-end of the 23S rRNA, where it nucleates assembly of the 50S subunit. This chain is Large ribosomal subunit protein uL3, found in Mesoplasma florum (strain ATCC 33453 / NBRC 100688 / NCTC 11704 / L1) (Acholeplasma florum).